The primary structure comprises 23 residues: Potassium channel toxin kappa-KTx 1.3 (23 aa).

2 disulfide bridges follow: Cys4–Cys22 and Cys8–Cys18.

It belongs to the short scorpion toxin superfamily. Potassium channel inhibitor kappa-KTx family. Kappa-KTx 1 subfamily. Monomer. Is not amidated. Expressed by the venom gland.

It is found in the secreted. Functionally, shows very weak blocking activity on voltage-gated potassium channels Kv10.1/KCNH1/EAG1 (6.2% inhibition by 40 uM of the toxin). Has no effect on the other voltage-gated potassium channels tested. This chain is Potassium channel toxin kappa-KTx 1.3, found in Heterometrus spinifer (Asia giant forest scorpion).